The chain runs to 215 residues: Pyrrolidone-carboxylate peptidase (215 aa).

Active-site residues include glutamate 80, cysteine 143, and histidine 167.

Belongs to the peptidase C15 family. Homotetramer.

Its subcellular location is the cytoplasm. It catalyses the reaction Release of an N-terminal pyroglutamyl group from a polypeptide, the second amino acid generally not being Pro.. Functionally, removes 5-oxoproline from various penultimate amino acid residues except L-proline. This chain is Pyrrolidone-carboxylate peptidase, found in Bacillus cereus (strain ZK / E33L).